Reading from the N-terminus, the 85-residue chain is Beta-toxin Ct6 (85 aa).

An N-terminal signal peptide occupies residues 1-18; it reads MKTFVLALCLVLIGMVYA. The LCN-type CS-alpha/beta domain maps to 19–84; that stretch reads KDGYLVSKHT…VYPLPNKSCG (66 aa). 4 disulfides stabilise this stretch: Cys-30–Cys-83, Cys-34–Cys-59, Cys-43–Cys-64, and Cys-47–Cys-66. Residue Cys-83 is modified to Cysteine amide.

The protein belongs to the long (4 C-C) scorpion toxin superfamily. Sodium channel inhibitor family. Beta subfamily. Expressed by the venom gland.

It is found in the secreted. Beta toxins bind voltage-independently at site-4 of sodium channels (Nav) and shift the voltage of activation toward more negative potentials thereby affecting sodium channel activation and promoting spontaneous and repetitive firing. The chain is Beta-toxin Ct6 from Centruroides tecomanus (Scorpion).